Reading from the N-terminus, the 378-residue chain is Calponin homolog OV9M (378 aa).

A compositionally biased stretch (low complexity) spans 1-20 (MPAQPAQENAQDADDAQANA). Residues 1-35 (MPAQPAQENAQDADDAQANATMETRVAGQGQPKRV) are disordered. Calponin-like repeat units lie at residues 50 to 75 (IPSQ…RNTQ), 98 to 123 (VRLQ…RDVC), 151 to 176 (VRLQ…RRET), 197 to 222 (IPLQ…RRET), 244 to 269 (IPSQ…RWEV), 285 to 310 (VRLQ…RNTT), and 330 to 355 (IPSQ…RDVK). The disordered stretch occupies residues 175–194 (ETTKMTDSKHPDYDHERPDQ). Positions 230–256 (HPEYDPESSIDSSTIPSQMGSNKYASQ) are disordered. Positions 238 to 256 (SIDSSTIPSQMGSNKYASQ) are enriched in polar residues. A disordered region spans residues 331 to 352 (PSQAGWNRGDSQKGMTGFGAPR).

The protein belongs to the calponin family. In terms of tissue distribution, found in the longitudinal muscles below the hypodermis.

Its function is as follows. Could be involved in muscle contraction. The chain is Calponin homolog OV9M from Onchocerca volvulus.